Consider the following 247-residue polypeptide: uncharacterized protein (247 aa).

This is an uncharacterized protein from Acidianus bottle-shaped virus (isolate Italy/Pozzuoli) (ABV).